A 239-amino-acid chain; its full sequence is Sugar fermentation stimulation protein homolog (239 aa).

It belongs to the SfsA family.

This chain is Sugar fermentation stimulation protein homolog, found in Methanobrevibacter smithii (strain ATCC 35061 / DSM 861 / OCM 144 / PS).